The following is an 802-amino-acid chain: Protein enabled homolog (802 aa).

The WH1 domain maps to 1–111 (MSEQSICQAR…SAMMHALEVL (111 aa)). A compositionally biased stretch (polar residues) spans 143–155 (NSQLPAQVQNGPS). Positions 143–166 (NSQLPAQVQNGPSQEELEIQRRQL) are disordered. Phosphoserine is present on Ser-144. A coiled-coil region spans residues 154-258 (PSQEELEIQR…ERERRMSNAA (105 aa)). A run of 7 repeats spans residues 175 to 179 (LERER), 180 to 184 (MERER), 185 to 189 (LERER), 190 to 194 (LERER), 195 to 199 (LERER), 200 to 204 (LEQEQ), and 205 to 209 (LERQR). The 7 X 5 AA tandem repeats of [LM]-E-[QR]-[EQ]-[QR] stretch occupies residues 175-209 (LERERMERERLERERLERERLERERLEQEQLERQR). The span at 245–254 (QVEWERERRM) shows a compositional bias: basic and acidic residues. 2 disordered regions span residues 245–287 (QVEW…PSYA) and 341–622 (ATVP…RPLT). Ser-255 carries the phosphoserine; by PKA modification. Residues 255–278 (SNAAPSSDSSLSSAPLPEYSSCQP) show a composition bias toward low complexity. Positions 348-361 (NKNSRPSSPVNTPS) are enriched in polar residues. Phosphoserine is present on Ser-383. The segment covering 386–410 (IMISSPPGKATGPRPVLPVCVSSPV) has biased composition (low complexity). The segment covering 431–464 (VSPPPTSGPAAPPPPPPPPPPPPPPPLPPPPLPP) has biased composition (pro residues). The segment covering 485 to 505 (STPSSKPSVLPSPSAGAPASA) has biased composition (low complexity). Polar residues predominate over residues 525-535 (AASQPAESPTP). Pro residues predominate over residues 542–553 (PPAPPPPPPLPS). Residue Tyr-557 is modified to Phosphotyrosine. A compositionally biased stretch (pro residues) spans 561-605 (LPPPPGPPPPPPLPSTGPPPPPPPPPPLPNQAPPPPPPPPAPPLP). Residues 623–643 (GLAAAIAGAKLRKVSRVEDGS) are EVH2 block A. The EVH2 stretch occupies residues 623-799 (GLAAAIAGAK…DAIRQELSKS (177 aa)). Residues 632 to 635 (KLRK) carry the KLKR motif. Disordered stretches follow at residues 639 to 675 (VEDG…GGSG) and 691 to 764 (AEKG…TEGL). Gly residues predominate over residues 664-675 (RGNGPLPLGGSG). The segment at 674 to 691 (SGLMEEMSALLARRRRIA) is EVH2 block B. Polar residues predominate over residues 731-760 (RTNTMNGSKSPVISRPKSTPSSQPSANGVQ). Residues Ser-738 and Ser-740 each carry the phosphoserine modification. Positions 765–799 (DYDRLKQDILDEMRKELAKLKEELIDAIRQELSKS) are EVH2 block C. Residues 767–797 (DRLKQDILDEMRKELAKLKEELIDAIRQELS) are a coiled coil.

This sequence belongs to the Ena/VASP family. Homotetramer. Interacts with APBB1IP, APBB1, PFN1 and ROBO4. Isoforms, containing the polyproline-rich regions with PPLP motifs, bind the WW domain of APBB1IP. Isoforms, containing the PPSY motif, bind, in vitro, to the WW2 and WW3 domains of NEDD4 and to the WW1 domain of YAP1. Binds the SH3 domain of BAIAP2-alpha but only after the autoinhibitory region of BAIAP2-alpha has been blocked by interaction with CDC42. Interacts, via the EVH1/WH1 domain, with the Pro-rich domains from VCL, ZYX and Listeria monocytogenes actA and with TES (via LIM domain). The TES LIM domain and the Pro-rich domains from VCL or ZYX compete for the same binding site. Interaction with ZYX is important for targeting ENAH to focal adhesions and enhances production of actin-rich structures at the apical surface of cells. Binds GPHN. Heterotrimer with TES and ACTL7A. Interacts with FAT1 (via EVH1 domains). Interacts, through the Pro-rich region, with the C-terminal SH3 domain of DNMPB. Interacts with PRPF40A. NTN1-induced PKA phosphorylation on Ser-255 directly parallels the formation of filopodial protrusions. As to expression, expressed in heart and testis, lower levels in lung, skeletal muscle, kidney, pancreas and brain. Isoform 5 is expressed exclusively in the brain. Isoform 2 is expressed predominantly in brain, testis, ovary and fat. In the brain, isoforms 2 and 5 are expressed at highest levels in the hippocampus, cortex and midbrain, and at lowest levels in the striatum and cerebellum. Isoform 6 is expressed in brain and spleen.

The protein resides in the cytoplasm. Its subcellular location is the cytoskeleton. It is found in the cell projection. It localises to the lamellipodium. The protein localises to the filopodium. The protein resides in the synapse. Its subcellular location is the cell junction. It is found in the focal adhesion. Ena/VASP proteins are actin-associated proteins involved in a range of processes dependent on cytoskeleton remodeling and cell polarity such as axon guidance and lamellipodial and filopodial dynamics in migrating cells. ENAH induces the formation of F-actin rich outgrowths in fibroblasts. Acts synergistically with BAIAP2-alpha and downstream of NTN1 to promote filipodia formation. This is Protein enabled homolog (Enah) from Mus musculus (Mouse).